We begin with the raw amino-acid sequence, 467 residues long: Gamma-aminobutyric acid receptor subunit rho-3 (467 aa).

An N-terminal signal peptide occupies residues Met-1 to Ala-24. Over Ser-25–His-266 the chain is Extracellular. 4-aminobutanoate contacts are provided by Arg-111 and Ser-175. Cys-184 and Cys-198 are disulfide-bonded. Glu-203 contributes to the 4-aminobutanoate binding site. A glycan (N-linked (GlcNAc...) asparagine) is linked at Asn-220. The helical transmembrane segment at Val-267 to Val-287 threads the bilayer. At Ser-288–Arg-299 the chain is on the cytoplasmic side. The helical transmembrane segment at Val-300 to Ser-320 threads the bilayer. Over Met-321–Asp-331 the chain is Extracellular. Residues Val-332 to Asn-352 traverse the membrane as a helical segment. An interaction with SQSTM1 region spans residues Glu-347 to Arg-448. At Tyr-353–Tyr-446 the chain is on the cytoplasmic side. A helical membrane pass occupies residues Ser-447–Val-467.

Belongs to the ligand-gated ion channel (TC 1.A.9) family. Gamma-aminobutyric acid receptor (TC 1.A.9.5) subfamily. GABRR3 sub-subfamily. Three rho subunits (rho-1/GBRR1, rho-2/GBRR2 and rho-3/GBRR3) coassemble either to form functional homopentamers or heteropentamers. Forms a ternary complex with SQSTM1 and PRKCZ.

Its subcellular location is the postsynaptic cell membrane. It localises to the cell membrane. It catalyses the reaction chloride(in) = chloride(out). Inhibited by TPMPA, a rho-specific antagonist, when forming a homopentamer. Functionally, rho subunit of the pentameric ligand-gated chloride channels responsible for mediating the effects of gamma-aminobutyric acid (GABA), the major inhibitory neurotransmitter in the brain. Rho-containing GABA-gated chloride channels are a subclass of GABA(A) receptors (GABAARs) entirely composed of rho subunits, where GABA molecules bind at the rho intersubunit interfaces. When activated by GABA, rho-GABAARs selectively allow the flow of chloride anions across the cell membrane down their electrochemical gradient. In Homo sapiens (Human), this protein is Gamma-aminobutyric acid receptor subunit rho-3.